The primary structure comprises 204 residues: MSAAVAASSGAPAADVEKGAAAADANVDGGGAPAAAAASGEGVVSAVVRRWRRQDLLEKSGSALRVAAWAFSLLAFVVMGANDHGDWRQFEHYEEYRYVVAIGVLAFIYTTLQLVRHGVRLTGGQDLQGKVAVLVDFAGDQVTAYLLMSAVSAAIPITNRMREGADNVFTDSSAASISMAFFAFLCLALSALVSGFKLAKQTYI.

Residues 1–60 are Cytoplasmic-facing; that stretch reads MSAAVAASSGAPAADVEKGAAAADANVDGGGAPAAAAASGEGVVSAVVRRWRRQDLLEKS. Residues 61 to 81 form a helical membrane-spanning segment; it reads GSALRVAAWAFSLLAFVVMGA. The Extracellular portion of the chain corresponds to 82–98; that stretch reads NDHGDWRQFEHYEEYRY. The chain crosses the membrane as a helical span at residues 99 to 119; sequence VVAIGVLAFIYTTLQLVRHGV. At 120–130 the chain is on the cytoplasmic side; that stretch reads RLTGGQDLQGK. The chain crosses the membrane as a helical span at residues 131–151; the sequence is VAVLVDFAGDQVTAYLLMSAV. The Extracellular portion of the chain corresponds to 152 to 175; the sequence is SAAIPITNRMREGADNVFTDSSAA. A helical membrane pass occupies residues 176-196; the sequence is SISMAFFAFLCLALSALVSGF. Residues 197–204 lie on the Cytoplasmic side of the membrane; sequence KLAKQTYI.

This sequence belongs to the Casparian strip membrane proteins (CASP) family. In terms of assembly, homodimer and heterodimers.

The protein localises to the cell membrane. This chain is CASP-like protein 4B4, found in Oryza sativa subsp. japonica (Rice).